A 173-amino-acid chain; its full sequence is NADH-ubiquinone oxidoreductase chain 6 (173 aa).

5 helical membrane-spanning segments follow: residues 1–21 (MTYV…AVAS), 25–45 (PYFG…VLIW), 53–73 (LVLF…SAAL), 82–102 (LGSW…FGIL), and 142–162 (GVLL…LELV).

It belongs to the complex I subunit 6 family.

It is found in the mitochondrion membrane. It catalyses the reaction a ubiquinone + NADH + 5 H(+)(in) = a ubiquinol + NAD(+) + 4 H(+)(out). In terms of biological role, core subunit of the mitochondrial membrane respiratory chain NADH dehydrogenase (Complex I) that is believed to belong to the minimal assembly required for catalysis. Complex I functions in the transfer of electrons from NADH to the respiratory chain. The immediate electron acceptor for the enzyme is believed to be ubiquinone. The polypeptide is NADH-ubiquinone oxidoreductase chain 6 (MT-ND6) (Tetraodon nigroviridis (Spotted green pufferfish)).